Here is a 486-residue protein sequence, read N- to C-terminus: ATP-dependent 6-phosphofructokinase (486 aa).

ATP is bound by residues Gly105, 171 to 172 (RG), and 196 to 199 (GDGT). Asp197 serves as a coordination point for Mg(2+). Residues 225-227 (TID), 270-272 (MGR), Glu323, and 378-381 (YMIR) contribute to the substrate site. The active-site Proton acceptor is the Asp227. Residues 484–486 (SKV) carry the Peroxisomal targeting signal motif.

The protein belongs to the phosphofructokinase type A (PFKA) family. PPi-dependent PFK group II subfamily. Atypical ATP-dependent clade 'X' sub-subfamily. In terms of assembly, homotetramer. Mg(2+) serves as cofactor.

It is found in the glycosome. The catalysed reaction is beta-D-fructose 6-phosphate + ATP = beta-D-fructose 1,6-bisphosphate + ADP + H(+). The protein operates within carbohydrate degradation; glycolysis; D-glyceraldehyde 3-phosphate and glycerone phosphate from D-glucose: step 3/4. Its activity is regulated as follows. Allosterically activated by AMP. Functionally, catalyzes the phosphorylation of D-fructose 6-phosphate to fructose 1,6-bisphosphate by ATP, the first committing step of glycolysis. This Leishmania donovani protein is ATP-dependent 6-phosphofructokinase.